A 1079-amino-acid polypeptide reads, in one-letter code: Integrator complex subunit 3 homolog (1079 aa).

Disordered stretches follow at residues 539–574 (ESSERETEAVFSDDDGENIARCNKNDENTDDDDDLP), 925–949 (YPSSSPNKRKRPSKGSSAASSTPSA), and 1010–1079 (AVGR…NDSD). Residues 938 to 949 (KGSSAASSTPSA) show a composition bias toward low complexity. Residues Ser1049, Ser1050, Ser1054, and Ser1055 each carry the phosphoserine modification. Positions 1062 to 1073 (HKITQAAKKRKK) are enriched in basic residues.

The protein belongs to the Integrator subunit 3 family. Belongs to the multiprotein complex Integrator, at least composed of IntS1, IntS2, IntS3, IntS4, omd/IntS5, IntS6, defl/IntS7, IntS8, IntS9, IntS10, IntS11, IntS12, asun/IntS13, IntS14 and IntS15. The core complex associates with protein phosphatase 2A subunits mts/PP2A and Pp2A-29B, to form the Integrator-PP2A (INTAC) complex.

It is found in the nucleus. It localises to the cytoplasm. Functionally, component of the integrator complex, a multiprotein complex that terminates RNA polymerase II (Pol II) transcription in the promoter-proximal region of genes. The integrator complex provides a quality checkpoint during transcription elongation by driving premature transcription termination of transcripts that are unfavorably configured for transcriptional elongation: the complex terminates transcription by (1) catalyzing dephosphorylation of the C-terminal domain (CTD) of Pol II subunit Polr2A/Rbp1 and Spt5, and (2) degrading the exiting nascent RNA transcript via endonuclease activity. The integrator complex is also involved in the 3'-end processing of the U7 snRNA, and also the spliceosomal snRNAs U1, U2, U4 and U5. The sequence is that of Integrator complex subunit 3 homolog (IntS3) from Drosophila virilis (Fruit fly).